Here is a 333-residue protein sequence, read N- to C-terminus: Cytochrome f (333 aa).

A signal peptide spans 1 to 44; the sequence is MRNACTRARLTRTARAMVKTLFIAIASVTFFFTSDLALPQSAAA. Tyr45, Cys66, Cys69, and His70 together coordinate heme. A helical transmembrane segment spans residues 299–318; the sequence is VGWLIAFVALVMLAQVMLVL.

This sequence belongs to the cytochrome f family. As to quaternary structure, the 4 large subunits of the cytochrome b6-f complex are cytochrome b6, subunit IV (17 kDa polypeptide, PetD), cytochrome f and the Rieske protein, while the 4 small subunits are PetG, PetL, PetM and PetN. The complex functions as a dimer. Heme is required as a cofactor.

The protein localises to the cellular thylakoid membrane. Its function is as follows. Component of the cytochrome b6-f complex, which mediates electron transfer between photosystem II (PSII) and photosystem I (PSI), cyclic electron flow around PSI, and state transitions. This Trichormus variabilis (strain ATCC 29413 / PCC 7937) (Anabaena variabilis) protein is Cytochrome f.